Here is a 207-residue protein sequence, read N- to C-terminus: Ribosomal RNA small subunit methyltransferase G (207 aa).

S-adenosyl-L-methionine-binding positions include glycine 73, leucine 78, 124-125 (VE), and arginine 139.

The protein belongs to the methyltransferase superfamily. RNA methyltransferase RsmG family.

It localises to the cytoplasm. The catalysed reaction is guanosine(527) in 16S rRNA + S-adenosyl-L-methionine = N(7)-methylguanosine(527) in 16S rRNA + S-adenosyl-L-homocysteine. Functionally, specifically methylates the N7 position of guanine in position 527 of 16S rRNA. The sequence is that of Ribosomal RNA small subunit methyltransferase G from Cronobacter sakazakii (strain ATCC BAA-894) (Enterobacter sakazakii).